The sequence spans 252 residues: 5'-nucleotidase SurE (252 aa).

The a divalent metal cation site is built by Asp-8, Asp-9, Ser-39, and Asn-91.

This sequence belongs to the SurE nucleotidase family. It depends on a divalent metal cation as a cofactor.

It localises to the cytoplasm. It catalyses the reaction a ribonucleoside 5'-phosphate + H2O = a ribonucleoside + phosphate. Its function is as follows. Nucleotidase that shows phosphatase activity on nucleoside 5'-monophosphates. In Geobacter metallireducens (strain ATCC 53774 / DSM 7210 / GS-15), this protein is 5'-nucleotidase SurE.